The sequence spans 317 residues: Transaldolase (317 aa).

Residue Lys-132 is the Schiff-base intermediate with substrate of the active site.

This sequence belongs to the transaldolase family. Type 1 subfamily. In terms of assembly, homodimer.

It is found in the cytoplasm. It catalyses the reaction D-sedoheptulose 7-phosphate + D-glyceraldehyde 3-phosphate = D-erythrose 4-phosphate + beta-D-fructose 6-phosphate. It participates in carbohydrate degradation; pentose phosphate pathway; D-glyceraldehyde 3-phosphate and beta-D-fructose 6-phosphate from D-ribose 5-phosphate and D-xylulose 5-phosphate (non-oxidative stage): step 2/3. Its function is as follows. Transaldolase is important for the balance of metabolites in the pentose-phosphate pathway. This Yersinia pseudotuberculosis serotype IB (strain PB1/+) protein is Transaldolase.